Here is a 1333-residue protein sequence, read N- to C-terminus: snRNA-activating protein complex subunit 4 (1333 aa).

Positions 29 to 84 are disordered; it reads HFEVSESSLSSDSEADSLPDEDLETAGAPILEEEGSSESSNDEEDPKDKALPEDPE. Acidic residues-rich tracts occupy residues 41 to 52 and 59 to 73; these read SEADSLPDEDLE and LEEE…DEED. Phosphoserine is present on Ser68. The tract at residues 84-133 is SNAPC5-binding; that stretch reads ETCLQLNMVYQEVIREKLAEVSQLLAQNQEQQEEILFDLSGTKCPKVKDG. Residues 250–288 form the Myb-like 1 domain; it reads EEALLGNRLDSHDWEKISNINFEGARSAEEIRKFWQSSE. An HTH myb-type 1 domain is found at 289 to 343; that stretch reads HPSISKQEWSTEEVERLKAIAATHGHLEWHLVAEELGTSRSAFQCLQKFQQYNKT. The H-T-H motif DNA-binding region spans 317–341; the sequence is WHLVAEELGTSRSAFQCLQKFQQYN. The 52-residue stretch at 344–395 folds into the Myb-like 2 domain; sequence LKRKEWTEEEDHMLTQLVQEMRVGNHIPYRKIVYFMEGRDSMQLIYRWTKSL. 2 HTH myb-type domains span residues 396 to 451 and 452 to 503; these read DPSL…HFSL and KKGR…RKKQ. 2 consecutive DNA-binding regions (H-T-H motif) follow at residues 424-447 and 476-499; these read WFKI…IRRL and WARI…KILA. Residues 503–515 are compositionally biased toward basic residues; the sequence is QHLQRKRGQRPRH. 4 disordered regions span residues 503 to 558, 662 to 702, 811 to 842, and 1079 to 1117; these read QHLQ…LEKS, LMKE…QNKQ, NAKN…LGSC, and LPSP…PEKA. Residues 516–546 are compositionally biased toward low complexity; the sequence is SSQWSSSGSSSSSSEDYGSSSGSDGSSGSEN. Polar residues-rich tracts occupy residues 672–686 and 811–826; these read LPSS…NNTA and NAKN…TGEQ. Residues 1131–1247 are SNAPC2-binding; it reads AIVTWLKGCQ…NSIPTTLSPD (117 aa). Residues Ser1252, Ser1254, Ser1301, and Ser1309 each carry the phosphoserine modification. Residues 1282 to 1333 form a disordered region; sequence PAAPDPVQSHLVSPGQRAPSPGEVSAPSPLDASDGLDDLNVLRTRRARHSRR. The span at 1324–1333 shows a compositional bias: basic residues; it reads RTRRARHSRR.

In terms of assembly, part of the SNAPc composed of 5 subunits: SNAPC1, SNAPC2, SNAPC3, SNAPC4 and SNAPC5. SNAPC4 interacts with SNAPC1, SNAPC2, SNAPC5, BRF2 and TBP.

It is found in the nucleus. Functionally, part of the SNAPc complex required for the transcription of both RNA polymerase II and III small-nuclear RNA genes. Binds to the proximal sequence element (PSE), a non-TATA-box basal promoter element common to these 2 types of genes. Recruits TBP and BRF2 to the U6 snRNA TATA box. The sequence is that of snRNA-activating protein complex subunit 4 from Mus musculus (Mouse).